The sequence spans 44 residues: Small ribosomal subunit protein eS31 (44 aa).

Positions 18, 21, 35, and 38 each coordinate Zn(2+). The C4-type zinc-finger motif lies at 18–38 (CPRCGDTVLAEHEDRQHCGKC).

This sequence belongs to the eukaryotic ribosomal protein eS31 family. In terms of assembly, part of the 30S ribosomal subunit. Requires Zn(2+) as cofactor.

This chain is Small ribosomal subunit protein eS31, found in Haloarcula marismortui (strain ATCC 43049 / DSM 3752 / JCM 8966 / VKM B-1809) (Halobacterium marismortui).